Consider the following 638-residue polypeptide: Chaperone protein DnaK (638 aa).

Position 199 is a phosphothreonine; by autocatalysis (Thr-199). Residues 603–618 (YAQPGAEAGAEQQGSA) are compositionally biased toward low complexity. The tract at residues 603–638 (YAQPGAEAGAEQQGSANNADDDIVDAEFEEVNDDKK) is disordered. Residues 621 to 638 (ADDDIVDAEFEEVNDDKK) show a composition bias toward acidic residues.

The protein belongs to the heat shock protein 70 family.

Acts as a chaperone. This Hydrogenovibrio crunogenus (strain DSM 25203 / XCL-2) (Thiomicrospira crunogena) protein is Chaperone protein DnaK.